Reading from the N-terminus, the 481-residue chain is MTQYTLKQAGSLLQSKQISAVELASAYLAAIAEKNPALNGYITIDQDKTLAEARAADERIAQGNASALTGVPVAYKDIFCQTGWRSACASKMLDNFVSPYTATVVQNLLDEGMVTLGRTNMDEFAMGSTNENSFYGAAKNPWNPEHVPGGSSGGSAAVVAARLAPAALGSDTGGSIRQPASHCGITGIKPTYGTVSRFGMVAYASSFDQAGPMAQTAEDCAILLNAMAGFDPKDSTSFEREKEDYTRDLDKPLKGVKIGLPKEYFSEGNSTDVQTALQNTIDLLKAQGAEPVEVSLPQTKLSIPAYYVLASAEAGTNLSRYDGVRYGHRAAQFGDLEEMYGKTRAEGFGSEVKRRIMIGTYVLSHGYYDAYYLKAQKLRRLVADDFQTAFARCDLILAPTAPSAAPKIGADTSPVETYLSDIYTIAVNLAGLPALTLPAGFSGGGLPVGVQLVGNYFAEAKILGAAHQIQLNSDWHGKRPE.

Catalysis depends on charge relay system residues K76 and S151. The active-site Acyl-ester intermediate is S175.

This sequence belongs to the amidase family. GatA subfamily. As to quaternary structure, heterotrimer of A, B and C subunits.

The enzyme catalyses L-glutamyl-tRNA(Gln) + L-glutamine + ATP + H2O = L-glutaminyl-tRNA(Gln) + L-glutamate + ADP + phosphate + H(+). Allows the formation of correctly charged Gln-tRNA(Gln) through the transamidation of misacylated Glu-tRNA(Gln) in organisms which lack glutaminyl-tRNA synthetase. The reaction takes place in the presence of glutamine and ATP through an activated gamma-phospho-Glu-tRNA(Gln). This chain is Glutamyl-tRNA(Gln) amidotransferase subunit A, found in Neisseria gonorrhoeae (strain NCCP11945).